A 1763-amino-acid chain; its full sequence is MSQTLSFVLKTHSVRKDFVHSVKRTLQRRRDLQYLYNKLSRPIRAEACPSCASYDVCPNCTSGSIPDDGSSKGQIPSWEDVTKTSTYSLLLSEDTSDELHPDDLVNVAAHIRKALSTQSHPANVDMCKEQLTSLLVMAEAMLPQRSRSTLPLHQKYVAARLEWREKFFSKPLDFLLEKIGTSRDILQITAVWKIIIEKACYCKSYGEHWFEAAKQKLREIKSYEHNTLKPLIGAFIDGLRLMTIDNPNPMGFLPKLIGLIKPLNLAMIIDNHENTLSGWVITLTAIMELYNITECTIDVITSIITGFYDKIGKATKFYSQIKALFTGFRSEDVANSFWYMAAAILCYLITGLIPNNGRLSKIKACLAGATTLVSGIVATQKLAAMFATWNSESIVNELSARTVAISELNNPTTTSDTDSVERLLELAKILHEEIKIHTLNPIMQSYNPILRNLMSTLDGVITSCNKRKAIAKKRPVPVCYILTGPPGCGKTTAALALAKKLSDQEPSVINLDVDHHDTYTGNEVCIVDEFDSSDKVDYANFVIGMVNSAPMVLNCDMLENKGKLFTSKYIIMTSNSETPVKPSSRRAGAFYRRVTIIDVANPLAESHKRARPGTSVPRSCYKKNFSHLSLAKRGAECWCKEYVLDPKGLQHQSIKAPPPTFLNIDSLAQTMKQDFTLKNMAFEAENGHSEHRYGFVCQQGEVETVRRLLNAVRTRLNATFTVCVGSEASSSIGCTAHVLTPDEPFNGKKYVVSRCNEASLSALEGNCVQSALGVCMSTKDLTHLCHFIRGKIVNDSVRLDELPANQHVVTVNSVFDLAWALRRHLTLAGQFQAIRAAYDVLTAPDKVPAMLRHWMDETSFSDEHVVTQFVTPGGIVILESCGGARIWALGHNVIRAGGVTATPTGGCIRFMGLSAQTMPWSEIFRELFSLLGRIWSSIKVSTLVLTALGMYASRFRPKSEAKGKTKSKVGPYRGRGVALTDDEYDEWREHNATRKLDLSVEDFLMLRHRAALGADDADAVKFRSWWNSRSRLADDYEDVTVIGKGGVKHEKIRTNTLRAVDRGYDVSFAEESGPGTKFHKNAIGSVTDVCGEHKGYCVHMGHGVYATVAHVAKGDSFFLGERIFDLKTNGEFCCFRSTKILPSAAPFFPGKPTRDPWGSPVATEWKPKPYTTTSGKIVGCFATTSTETHPGDCGLPYIDDNGRVTGLHTGSGGPKTPSAKLVVPYVHIDMKTKSVTAQKYDVTKPDISYKGLICKQLDEIRIIPKGTRLHVSPAHTEDFEECSHQPASLGSGDPRCPKSLTAIVVDSLKPYCDKVEGPPHDILHRVQKMLIDHLSGFVPVNISSETSMLSAFHKLNHDTSCGPYLGGRKKDHMTNGEPDKPLLDLLSAKWKLATQGIALPHEYTIGLKDELRPVEKVAEGKRRMIWGCDVGVATVCAAAFKGVSDAITANHQYGPVQVGINMDSPSVEALHQRIKSAAKVYAVDYSKWDSTQSPRVSAASIDILRYFSDRSPIVDSAANTLKSPPIAIFNGVAVKVSSGLPSGMPLTSVINSLNHCLYVGCAILQSLEARGVPVTWNLFSTFDMMTYGDDGVYMFPMMFASVSDQIFANLSAYGLKPTRVDKSVGSIEPIDPESVVFLKRTITRTPQGIRGLLDRSSIIRQFYYIKGENSDDWKTPPKSIDPTSRGQQLWNACLYASQHGVEFYNKIYKLAQKAVEYEELHLEPPTYHSALEHYNNQFNGVEARSDQIDSSGMTALHCDVFEV.

The SF3 helicase domain maps to 458-614 (DGVITSCNKR…ESHKRARPGT (157 aa)). Residue 484 to 491 (GPPGCGKT) participates in ATP binding. Position 984 is an O-(5'-phospho-RNA)-tyrosine (tyrosine 984). The residue at position 1040 (threonine 1040) is a Phosphothreonine. Serine 1067 carries the phosphoserine modification. In terms of domain architecture, Peptidase C24 spans 1073-1229 (GPGTKFHKNA…KLVVPYVHID (157 aa)). Residues histidine 1110, glutamate 1131, and cysteine 1193 each act as for 3CLpro activity in the active site. The RdRp catalytic domain maps to 1478–1603 (AKVYAVDYSK…MFPMMFASVS (126 aa)).

Homodimer. Interacts with NTPase, protein p30 and protease-polymerase p76. In terms of assembly, interacts with capsid protein VP1 and protease-polymerase p76. Interacts with host IEF4e; this interaction plays a role in translation of viral proteins. As to quaternary structure, homooligomer. Interacts with Vpg, protein p32 and may interact with capsid protein VP1. Post-translationally, specific enzymatic cleavages in vivo yield mature proteins. Pro-Pol is first autocatalytically cleaved, then processes the whole polyprotein. VPg is uridylylated by the polymerase and is covalently attached to the 5'-end of the polyadenylated genomic and subgenomic RNAs. This uridylylated form acts as a nucleotide-peptide primer for the polymerase.

It localises to the host endoplasmic reticulum membrane. The enzyme catalyses a ribonucleoside 5'-triphosphate + H2O = a ribonucleoside 5'-diphosphate + phosphate + H(+). The catalysed reaction is RNA(n) + a ribonucleoside 5'-triphosphate = RNA(n+1) + diphosphate. It catalyses the reaction Endopeptidase with a preference for cleavage when the P1 position is occupied by Glu-|-Xaa and the P1' position is occupied by Gly-|-Yaa.. Its function is as follows. Together with NTPase and NS4, initiates the formation of the replication complex. Induces the proliferation of the host smooth ER membranes forming long tubular structures. These remodeled membranes probably form the viral factories that contain the replication complex. Functionally, displays NTPase activity, but no helicase activity. Induces the formation of convoluted membranes derived from the host ER. These remodeled membranes probably form the viral factories that contain the replication complex. Together with NS2 and NS4, initiates the formation of the replication complex. In terms of biological role, probable key protein responsible for the formation of membrane alterations by the virus. Induces the formation of convoluted membranes derived from the host ER. These remodeled membranes probably form the viral factories that contain the replication complex. Together with NS2 and NTPase, initiates the formation of the replication complex. Viral genome-linked protein is covalently linked to the 5'-end of the positive-strand, negative-strand genomic RNAs and subgenomic RNA. Acts as a genome-linked replication primer. May recruit ribosome to viral RNA thereby promoting viral proteins translation. Interacts with host translation initiation complex to allow the translation of viral proteins. Its function is as follows. Processes the polyprotein: Pro-Pol is first released by autocleavage, then all other proteins are cleaved. Cleaves host translation initiation factor eIF4G1, eIF4G2 and PABP1 thereby inducing a shutdown of host protein synthesis. This shutdown may not prevent viral mRNA from being translated since viral Vpg replaces the cap. Also functions as an RNA-directed RNA polymerase, which replicates genomic and antigenomic viral RNA by recognizing specific signals. Transcribes a subgenomic mRNA by initiating RNA synthesis internally on antigenomic RNA. This sgRNA codes for structural proteins. Catalyzes the covalent attachment VPg with viral RNAs. Cleaves host G3BP1 thereby preventing the assembly of host stress granules. This Feline calicivirus (strain Cat/United States/Urbana/1960) (FCV) protein is Genome polyprotein.